Consider the following 141-residue polypeptide: U-scoloptoxin(17)-Er3a (141 aa).

The N-terminal stretch at 1–21 (MKSTFALVFGILMVIAHLSFA) is a signal peptide.

Belongs to the scoloptoxin-17 family. Post-translationally, contains 3 disulfide bonds. As to expression, expressed by the venom gland.

Its subcellular location is the secreted. In Ethmostigmus rubripes (Giant centipede), this protein is U-scoloptoxin(17)-Er3a.